The primary structure comprises 62 residues: Sec-independent protein translocase protein TatA (62 aa).

The helical transmembrane segment at methionine 1–glycine 21 threads the bilayer.

Belongs to the TatA/E family. As to quaternary structure, the Tat system comprises two distinct complexes: a TatABC complex, containing multiple copies of TatA, TatB and TatC subunits, and a separate TatA complex, containing only TatA subunits. Substrates initially bind to the TatABC complex, which probably triggers association of the separate TatA complex to form the active translocon.

The protein localises to the cell inner membrane. Part of the twin-arginine translocation (Tat) system that transports large folded proteins containing a characteristic twin-arginine motif in their signal peptide across membranes. TatA could form the protein-conducting channel of the Tat system. The sequence is that of Sec-independent protein translocase protein TatA from Oleidesulfovibrio alaskensis (strain ATCC BAA-1058 / DSM 17464 / G20) (Desulfovibrio alaskensis).